We begin with the raw amino-acid sequence, 212 residues long: Pyridoxine/pyridoxamine 5'-phosphate oxidase (212 aa).

FMN is bound by residues 57–62 (RMVLLK), 72–73 (YT), Arg78, Lys79, and Gln101. Lys62 is a binding site for substrate. 3 residues coordinate substrate: Tyr119, Arg123, and Ser127. FMN-binding positions include 136–137 (QS) and Trp181. Substrate is bound at residue 187-189 (RLH). Arg191 is an FMN binding site.

It belongs to the pyridoxamine 5'-phosphate oxidase family. As to quaternary structure, homodimer. FMN serves as cofactor.

The enzyme catalyses pyridoxamine 5'-phosphate + O2 + H2O = pyridoxal 5'-phosphate + H2O2 + NH4(+). It carries out the reaction pyridoxine 5'-phosphate + O2 = pyridoxal 5'-phosphate + H2O2. It functions in the pathway cofactor metabolism; pyridoxal 5'-phosphate salvage; pyridoxal 5'-phosphate from pyridoxamine 5'-phosphate: step 1/1. It participates in cofactor metabolism; pyridoxal 5'-phosphate salvage; pyridoxal 5'-phosphate from pyridoxine 5'-phosphate: step 1/1. In terms of biological role, catalyzes the oxidation of either pyridoxine 5'-phosphate (PNP) or pyridoxamine 5'-phosphate (PMP) into pyridoxal 5'-phosphate (PLP). This is Pyridoxine/pyridoxamine 5'-phosphate oxidase from Erythrobacter litoralis (strain HTCC2594).